A 93-amino-acid polypeptide reads, in one-letter code: Pyrimidine/purine nucleoside phosphorylase (93 aa).

The protein belongs to the nucleoside phosphorylase PpnP family.

It carries out the reaction a purine D-ribonucleoside + phosphate = a purine nucleobase + alpha-D-ribose 1-phosphate. The enzyme catalyses adenosine + phosphate = alpha-D-ribose 1-phosphate + adenine. It catalyses the reaction cytidine + phosphate = cytosine + alpha-D-ribose 1-phosphate. The catalysed reaction is guanosine + phosphate = alpha-D-ribose 1-phosphate + guanine. It carries out the reaction inosine + phosphate = alpha-D-ribose 1-phosphate + hypoxanthine. The enzyme catalyses thymidine + phosphate = 2-deoxy-alpha-D-ribose 1-phosphate + thymine. It catalyses the reaction uridine + phosphate = alpha-D-ribose 1-phosphate + uracil. The catalysed reaction is xanthosine + phosphate = alpha-D-ribose 1-phosphate + xanthine. Its function is as follows. Catalyzes the phosphorolysis of diverse nucleosides, yielding D-ribose 1-phosphate and the respective free bases. Can use uridine, adenosine, guanosine, cytidine, thymidine, inosine and xanthosine as substrates. Also catalyzes the reverse reactions. This chain is Pyrimidine/purine nucleoside phosphorylase, found in Hahella chejuensis (strain KCTC 2396).